A 370-amino-acid polypeptide reads, in one-letter code: tRNA pseudouridine synthase D (370 aa).

D77 serves as the catalytic Nucleophile. The region spanning 152 to 297 is the TRUD domain; the sequence is GVPNYFGEQR…LEQERRPLLL (146 aa).

This sequence belongs to the pseudouridine synthase TruD family.

It catalyses the reaction uridine(13) in tRNA = pseudouridine(13) in tRNA. In terms of biological role, responsible for synthesis of pseudouridine from uracil-13 in transfer RNAs. In Shewanella oneidensis (strain ATCC 700550 / JCM 31522 / CIP 106686 / LMG 19005 / NCIMB 14063 / MR-1), this protein is tRNA pseudouridine synthase D.